The following is a 120-amino-acid chain: Large ribosomal subunit protein bL12 (120 aa).

Belongs to the bacterial ribosomal protein bL12 family. As to quaternary structure, homodimer. Part of the ribosomal stalk of the 50S ribosomal subunit. Forms a multimeric L10(L12)X complex, where L10 forms an elongated spine to which 2 to 4 L12 dimers bind in a sequential fashion. Binds GTP-bound translation factors.

Functionally, forms part of the ribosomal stalk which helps the ribosome interact with GTP-bound translation factors. Is thus essential for accurate translation. The polypeptide is Large ribosomal subunit protein bL12 (Shouchella clausii (strain KSM-K16) (Alkalihalobacillus clausii)).